Reading from the N-terminus, the 40-residue chain is SGSKTANIGDGCFGVRLDHIGTTSGMGCGRPRPKPTPGGS.

The propeptide occupies 1 to 8 (SGSKTANI). Residues Cys12 and Cys28 are joined by a disulfide bond. The interval 20 to 40 (IGTTSGMGCGRPRPKPTPGGS) is disordered.

This sequence belongs to the natriuretic peptide family. As to expression, expressed by the venom gland.

It is found in the secreted. Snake venom natriuretic peptide that targets both NPR1 and NPR2. Exhibits hypotensive and vasodepressor activities. The protein is Natriuretic peptide PpNP-b of Pseudechis porphyriacus (Red-bellied black snake).